The following is a 176-amino-acid chain: MSLSVRFAAQCAARQLRASTRASSSLLVQKRFESTAAPAANPKIAAIVDQISTLTLLETSELVSSLKSRLNIPDLPVGGFAAAAPAAAPAAAPAEEEEAAPAAAEKTLFTLKLEKFDAAAKPKVIKEVKNLLGLSLVESKKFVESAPKVMKESVPKEDAEKIVAAMKELGATVTMD.

Belongs to the bacterial ribosomal protein bL12 family. As to quaternary structure, component of the mitochondrial large ribosomal subunit (mt-LSU). Mature N.crassa 74S mitochondrial ribosomes consist of a small (37S) and a large (54S) subunit. The 37S small subunit contains a 16S ribosomal RNA (16S mt-rRNA) and 32 different proteins. The 54S large subunit contains a 23S rRNA (23S mt-rRNA) and 42 different proteins.

The protein resides in the mitochondrion. Functionally, component of the mitochondrial ribosome (mitoribosome), a dedicated translation machinery responsible for the synthesis of mitochondrial genome-encoded proteins, including at least some of the essential transmembrane subunits of the mitochondrial respiratory chain. The mitoribosomes are attached to the mitochondrial inner membrane and translation products are cotranslationally integrated into the membrane. The sequence is that of Large ribosomal subunit protein bL12m (mrpl12) from Neurospora crassa (strain ATCC 24698 / 74-OR23-1A / CBS 708.71 / DSM 1257 / FGSC 987).